The sequence spans 423 residues: UBX domain-containing protein 1 (423 aa).

A disordered region spans residues glutamine 44–serine 167. Basic and acidic residues predominate over residues aspartate 46–lysine 66. Polar residues predominate over residues alanine 69–isoleucine 79. Low complexity predominate over residues serine 115–serine 130. Phosphoserine occurs at positions 128, 210, and 224. In terms of domain architecture, SEP spans lysine 232–lysine 297. Lysine 241 participates in a covalent cross-link: Glycyl lysine isopeptide (Lys-Gly) (interchain with G-Cter in ubiquitin). The interval proline 299 to aspartate 348 is disordered. Phosphoserine is present on residues serine 315, serine 321, and serine 322. Phosphothreonine is present on threonine 331. The UBX domain maps to proline 344–arginine 421.

Forms a complex composed of CDC48, NPL4, UFD1, DOA1, SHP1 and deubiquitinase OTU1. Interacts with CDC48.

Its subcellular location is the nucleus. It is found in the cytoplasm. Its function is as follows. Involved in CDC48-dependent protein degradation through the ubiquitin/proteasome pathway. Direct or indirect positive regulator of GLC7 activity. The sequence is that of UBX domain-containing protein 1 (SHP1) from Saccharomyces cerevisiae (strain ATCC 204508 / S288c) (Baker's yeast).